The sequence spans 433 residues: O-methyltransferase aclM (433 aa).

A coiled-coil region spans residues 5-37 (LTDAERTALQTSLEALNRQVEATRNILRSNSQK). S-adenosyl-L-methionine-binding positions include aspartate 277 and 311–313 (GDF). Histidine 330 functions as the Proton acceptor in the catalytic mechanism.

Belongs to the class I-like SAM-binding methyltransferase superfamily. Cation-independent O-methyltransferase family. COMT subfamily.

It functions in the pathway mycotoxin biosynthesis. Functionally, O-methyltransferase; part of the gene cluster that mediates the biosynthesis of aspirochlorine (or antibiotic A30641), an unusual halogenated spiro compound with distinctive antifungal properties due to selective inhibition of protein biosynthesis, and which is also active against bacteria, viruses, and murine tumor cells. The non-ribosomal peptide synthetase (NRPS) aclP is responsible the formation of the diketopiperazine (DKP) core from the condensation of 2 phenylalanine residues. One Phe residue is tailored into chlorotyrosine by hydroxylation and chlorination, whereas the second Phe undergoes an unprecedented C-C bond cleavage to be converted into glycine. After formation of the DKP, sulfur is incorporated into the DKP by conjugation with glutathione by aclG, followed by its stepwise degradation to the thiol by aclI, aclJ and aclK, and the dithiol oxidation by aclT. In addition, oxygenases (aclB, aclC, aclL and aclO) and O-methyltransferases (aclM and aclU) act as tailoring enzymes to produce the intermediate dechloroaspirochlorine. Ultimately, chlorination of dechloroaspirochlorine by the halogenase aclH is the last step in the aspirochlorine pathway. This chain is O-methyltransferase aclM, found in Aspergillus oryzae (strain ATCC 42149 / RIB 40) (Yellow koji mold).